The chain runs to 293 residues: MNEEITLLAAAADPAATENIGWVQTIVLSIVQGLTEFLPISSSGHLRIISELFWGADAGASFTAVVQLGTEAAVLVFFAKEIWQIITGWFAGVFNKERRGFEYRMGWMIIVATIPVVILGVLGKDLIREALRNMWITASVLILFSLVFILAEKMGKKERDYDKLTMKDAIIMGLAQCLALIPGVSRSGGTISAGLFLGLKREVATKFSFLLAIPAVLGSGLYSLPDAFAPSSGQAASGLQLTVGTLVAFVVGYISIAWLMKFVANHSFSWFAAYRIPAGLLVMLLLALGMLNP.

Transmembrane regions (helical) follow at residues 74–94, 107–127, 134–154, 209–229, 243–263, and 271–291; these read VLVF…AGVF, WMII…KDLI, MWIT…AEKM, FLLA…DAFA, VGTL…MKFV, and FAAY…LGML.

It belongs to the UppP family.

Its subcellular location is the cell membrane. The enzyme catalyses di-trans,octa-cis-undecaprenyl diphosphate + H2O = di-trans,octa-cis-undecaprenyl phosphate + phosphate + H(+). Catalyzes the dephosphorylation of undecaprenyl diphosphate (UPP). Confers resistance to bacitracin. The sequence is that of Undecaprenyl-diphosphatase from Corynebacterium glutamicum (strain ATCC 13032 / DSM 20300 / JCM 1318 / BCRC 11384 / CCUG 27702 / LMG 3730 / NBRC 12168 / NCIMB 10025 / NRRL B-2784 / 534).